Consider the following 385-residue polypeptide: Protein-glutamate methylesterase/protein-glutamine glutaminase (385 aa).

The 119-residue stretch at 20–138 folds into the Response regulatory domain; the sequence is RVMIVDDSVV…EASAADIFKH (119 aa). At Asp71 the chain carries 4-aspartylphosphate. The 195-residue stretch at 189–383 folds into the CheB-type methylesterase domain; the sequence is GVTAPRVLLI…PKLVRLFSGD (195 aa). Active-site residues include Ser201, His229, and Asp325.

This sequence belongs to the CheB family. Phosphorylated by CheA. Phosphorylation of the N-terminal regulatory domain activates the methylesterase activity.

Its subcellular location is the cytoplasm. The enzyme catalyses [protein]-L-glutamate 5-O-methyl ester + H2O = L-glutamyl-[protein] + methanol + H(+). It catalyses the reaction L-glutaminyl-[protein] + H2O = L-glutamyl-[protein] + NH4(+). Its function is as follows. Involved in chemotaxis. Part of a chemotaxis signal transduction system that modulates chemotaxis in response to various stimuli. Catalyzes the demethylation of specific methylglutamate residues introduced into the chemoreceptors (methyl-accepting chemotaxis proteins or MCP) by CheR. Also mediates the irreversible deamidation of specific glutamine residues to glutamic acid. This Rhodopseudomonas palustris (strain BisB5) protein is Protein-glutamate methylesterase/protein-glutamine glutaminase.